Reading from the N-terminus, the 294-residue chain is Filamin-B (294 aa).

Filamin repeat units follow at residues 1 to 67 (GTRL…KVRV) and 71 to 163 (GQAG…KAKV). 2 positions are modified to phosphoserine: S61 and S157. K160 participates in a covalent cross-link: Glycyl lysine isopeptide (Lys-Gly) (interchain with G-Cter in ISG15). The segment at 164–198 (TGQRLVGPGSTNETSSILVESVTRSSTETCYSAIP) is hinge 2. A self-association site, tail region spans residues 164-294 (TGQRLVGPGS…PGSPFHVTVP (131 aa)). Residues S173 and S184 each carry the phosphoserine modification. A Filamin 24 repeat occupies 199–293 (KASSDASKVT…IPGSPFHVTV (95 aa)). Residues K210 and K216 each carry the N6-succinyllysine modification. K268 is modified (N6-acetyllysine).

It belongs to the filamin family. As to quaternary structure, homodimer. Interacts with FLNA, FLNC, INPPL1, ITGB1A, ITGB1D, ITGB3, ITGB6, MYOT, MYOZ1, PSEN1 and PSEN2. Interacts with MICALL2. Interacts with RFLNA and RFLNB. Interacts with HTLV-I viral p13 protein. Interacts with ASB2; the interaction targets FLNB for proteasomal degradation. Post-translationally, ISGylation prevents ability to interact with the upstream activators of the JNK cascade and inhibits IFNA-induced JNK signaling. In terms of processing, ubiquitination by a SCF-like complex containing ASB2 leads to proteasomal degradation which promotes muscle differentiation.

Its subcellular location is the cytoplasm. The protein localises to the cell cortex. It is found in the cytoskeleton. The protein resides in the myofibril. It localises to the sarcomere. Its subcellular location is the z line. In terms of biological role, connects cell membrane constituents to the actin cytoskeleton. May promote orthogonal branching of actin filaments and links actin filaments to membrane glycoproteins. Anchors various transmembrane proteins to the actin cytoskeleton. This is Filamin-B (FLNB) from Oryctolagus cuniculus (Rabbit).